We begin with the raw amino-acid sequence, 340 residues long: Uroporphyrinogen decarboxylase (340 aa).

Residues 21-25 (RQAGR), Phe-40, Asp-71, Tyr-148, Ser-203, and His-316 contribute to the substrate site.

The protein belongs to the uroporphyrinogen decarboxylase family. In terms of assembly, homodimer.

The protein localises to the cytoplasm. The enzyme catalyses uroporphyrinogen III + 4 H(+) = coproporphyrinogen III + 4 CO2. Its pathway is porphyrin-containing compound metabolism; protoporphyrin-IX biosynthesis; coproporphyrinogen-III from 5-aminolevulinate: step 4/4. In terms of biological role, catalyzes the decarboxylation of four acetate groups of uroporphyrinogen-III to yield coproporphyrinogen-III. This is Uroporphyrinogen decarboxylase from Campylobacter jejuni subsp. jejuni serotype O:2 (strain ATCC 700819 / NCTC 11168).